The following is a 222-amino-acid chain: 7-cyano-7-deazaguanine synthase (222 aa).

14–24 (FSGGQDSTTCL) serves as a coordination point for ATP. Positions 192, 201, 204, and 207 each coordinate Zn(2+).

It belongs to the QueC family. In terms of assembly, homodimer. Zn(2+) serves as cofactor.

It carries out the reaction 7-carboxy-7-deazaguanine + NH4(+) + ATP = 7-cyano-7-deazaguanine + ADP + phosphate + H2O + H(+). Its pathway is purine metabolism; 7-cyano-7-deazaguanine biosynthesis. Its function is as follows. Catalyzes the ATP-dependent conversion of 7-carboxy-7-deazaguanine (CDG) to 7-cyano-7-deazaguanine (preQ(0)). This is 7-cyano-7-deazaguanine synthase from Clostridium acetobutylicum (strain ATCC 824 / DSM 792 / JCM 1419 / IAM 19013 / LMG 5710 / NBRC 13948 / NRRL B-527 / VKM B-1787 / 2291 / W).